The sequence spans 364 residues: tRNA 2-selenouridine synthase (364 aa).

The Rhodanese domain maps to 14–137; the sequence is LLADTPLIDV…LRQTAIQATW (124 aa). Cysteine 97 acts as the S-selanylcysteine intermediate in catalysis.

Belongs to the SelU family. In terms of assembly, monomer.

It carries out the reaction 5-methylaminomethyl-2-thiouridine(34) in tRNA + selenophosphate + (2E)-geranyl diphosphate + H2O + H(+) = 5-methylaminomethyl-2-selenouridine(34) in tRNA + (2E)-thiogeraniol + phosphate + diphosphate. It catalyses the reaction 5-methylaminomethyl-2-thiouridine(34) in tRNA + (2E)-geranyl diphosphate = 5-methylaminomethyl-S-(2E)-geranyl-thiouridine(34) in tRNA + diphosphate. The catalysed reaction is 5-methylaminomethyl-S-(2E)-geranyl-thiouridine(34) in tRNA + selenophosphate + H(+) = 5-methylaminomethyl-2-(Se-phospho)selenouridine(34) in tRNA + (2E)-thiogeraniol. The enzyme catalyses 5-methylaminomethyl-2-(Se-phospho)selenouridine(34) in tRNA + H2O = 5-methylaminomethyl-2-selenouridine(34) in tRNA + phosphate. Functionally, involved in the post-transcriptional modification of the uridine at the wobble position (U34) of tRNA(Lys), tRNA(Glu) and tRNA(Gln). Catalyzes the conversion of 2-thiouridine (S2U-RNA) to 2-selenouridine (Se2U-RNA). Acts in a two-step process involving geranylation of 2-thiouridine (S2U) to S-geranyl-2-thiouridine (geS2U) and subsequent selenation of the latter derivative to 2-selenouridine (Se2U) in the tRNA chain. The chain is tRNA 2-selenouridine synthase from Salmonella paratyphi B (strain ATCC BAA-1250 / SPB7).